Reading from the N-terminus, the 877-residue chain is GPI inositol-deacylase (877 aa).

A helical transmembrane segment spans residues 35–55 (FLSRLFCALAVLFSYSIYQSF). Serine 206 is an active-site residue. N-linked (GlcNAc...) asparagine glycans are attached at residues asparagine 291, asparagine 336, asparagine 374, asparagine 448, and asparagine 473. 8 helical membrane passes run 597–617 (VLAW…SDFI), 637–657 (MPIC…LPDF), 674–694 (PLVG…SFVI), 735–755 (VLVN…ILLW), 771–791 (ISTC…HVAI), 809–829 (NFYY…GGTI), 834–854 (VCLK…FSVG), and 857–877 (WTWI…ASII).

The protein belongs to the GPI inositol-deacylase family.

The protein localises to the endoplasmic reticulum membrane. Involved in inositol deacylation of GPI-anchored proteins which plays important roles in the quality control and ER-associated degradation of GPI-anchored proteins. In Cryptococcus neoformans var. neoformans serotype D (strain JEC21 / ATCC MYA-565) (Filobasidiella neoformans), this protein is GPI inositol-deacylase (BST1).